The chain runs to 669 residues: Alpha-1,4-glucan:maltose-1-phosphate maltosyltransferase 2 (669 aa).

3 residues coordinate alpha-maltose 1-phosphate: Lys255, Gln315, and Asp350. Asp385 (nucleophile) is an active-site residue. Residue Asn386 coordinates alpha-maltose 1-phosphate. The active-site Proton donor is the Glu414. 525–526 (KY) contributes to the alpha-maltose 1-phosphate binding site.

Belongs to the glycosyl hydrolase 13 family. GlgE subfamily. As to quaternary structure, homodimer.

The catalysed reaction is alpha-maltose 1-phosphate + [(1-&gt;4)-alpha-D-glucosyl](n) = [(1-&gt;4)-alpha-D-glucosyl](n+2) + phosphate. In terms of biological role, maltosyltransferase that uses maltose 1-phosphate (M1P) as the sugar donor to elongate linear or branched alpha-(1-&gt;4)-glucans. Maltooligosaccharides with a degree of polymerization (DP) superior or equal to 4 are efficient acceptors, with DP6 being optimal in the GlgE-catalyzed polymerization with M1P. Is probably involved in a branched alpha-glucan biosynthetic pathway from trehalose, together with TreS, Mak and GlgB. This is Alpha-1,4-glucan:maltose-1-phosphate maltosyltransferase 2 (glgE2) from Streptomyces coelicolor (strain ATCC BAA-471 / A3(2) / M145).